Here is a 354-residue protein sequence, read N- to C-terminus: Protein sex-lethal (354 aa).

A disordered region spans residues 1–21 (MYGNNNPGSNNNNGGYPPYGY). 2 RRM domains span residues 125 to 203 (TNLI…YARP) and 211 to 291 (TNLY…LAEE).

As to quaternary structure, part of a complex containing fl(2)d, Sxl and vir. Part of a complex composed of at least mei-P26, bam, bgcn and Sxl; this complex is involved in translational repression of nanos mRNA. interacts with mei-p26. Interacts with nito. Interacts with Unr; cooperates with Unr to prevent translation of msl-2 transcripts. Interacts with how; promoting nuclear retention of msl-2 transcripts. In terms of tissue distribution, expressed in somatic tissues, but not in the pole cells, which are the precursors of the germline. Expressed in the anterior of the germarium.

The protein localises to the nucleus. Its subcellular location is the cytoplasm. Functionally, sex determination switch protein, which controls sexual development and dosage compensation in females. Sxl protein is only active in females: it is inactive in males throughout development. Acts as a mRNA-binding protein, which specifically binds to a subset of pre-mRNAs and mRNAs and regulates their processing and/or translation. Binds nanos mRNA and is involved in bam-bgcn mediated repression of nanos mRNA translation. Promotes sexual development by controlling the female-specific alternative splicing of the transformer (tra) pre-mRNA: binds tightly to a characteristic uridine-rich polypyrimidine tract at the non-sex specific 3' splice site in one of the tra introns, preventing the general splicing factor U2AF from binding to this site and forcing it to bind to the female-specific 3' splice site. Acts as an inhibitor of dosage compensation in females by preventing production of msl-2 protein, an essential component of the MSL complex, the complex that mediates X-chromosome dosage compensation. Specifically binds to uridine stretches in both the 5'- and 3'-UTR of msl-2 transcripts. Sxl first acts at the splicing level by promoting retention of an intron in the 5' UTR of msl-2 pre-mRNA. The retained intron contains Sxl-binding sites that are required for subsequent steps of repression: after msl-2 mRNA export into the cytoplasm, Sxl coordinates its translational repression by targeting early steps of translation initiation. Together with how, Sxl also prevents production of msl-2 protein by preventing nuclear export of msl-2 transcripts. In terms of biological role, embryo-specific product, which is expressed early only in female embryos and specifies female-adult specific splicing. In Drosophila melanogaster (Fruit fly), this protein is Protein sex-lethal.